Consider the following 2774-residue polypeptide: Teneurin-2 (2774 aa).

The 375-residue stretch at 1 to 375 (MDVKDRRHRS…KPSKYCSWKC (375 aa)) folds into the Teneurin N-terminal domain. Over 1–379 (MDVKDRRHRS…YCSWKCAALS (379 aa)) the chain is Cytoplasmic. A phosphoserine mark is found at Ser90 and Ser124. Residues 111–271 (TGSDADSDTE…HHHSSANSLN (161 aa)) form a disordered region. Over residues 141–155 (SSGLSSRENSALTLT) the composition is skewed to polar residues. Position 155 is a phosphothreonine (Thr155). Residue Ser157 is modified to Phosphoserine. Residues 159-168 (NENKSDDENG) show a composition bias toward basic and acidic residues. A compositionally biased stretch (low complexity) spans 176–188 (SPSLLPSAQLPSS). Positions 202 to 211 (DSNTSHQIMD) are enriched in polar residues. The span at 229 to 240 (SGPQQASSSGPP) shows a compositional bias: low complexity. The chain crosses the membrane as a helical span at residues 380–400 (AIAAALLLAILLAYFIAMHLL). The Extracellular segment spans residues 401 to 2774 (GLNWQLQPAD…FLRQNEMGKR (2374 aa)). N-linked (GlcNAc...) asparagine glycosylation is found at Asn443 and Asn482. 8 consecutive EGF-like domains span residues 575–603 (DCPR…ADCA), 598–634 (LGAD…AECD), 636–668 (PMNQ…EHCE), 669–701 (EVDC…NCEL), 702–735 (ARVQ…PDCS), 738–766 (VCSV…AACD), 769–797 (VCHP…EHCT), and 808–841 (DGCP…PGCN). 22 disulfides stabilise this stretch: Cys576-Cys586, Cys580-Cys591, Cys593-Cys602, Cys611-Cys622, Cys624-Cys633, Cys640-Cys651, Cys645-Cys656, Cys658-Cys667, Cys672-Cys683, Cys677-Cys688, Cys690-Cys699, Cys710-Cys723, Cys725-Cys734, Cys739-Cys749, Cys743-Cys754, Cys756-Cys765, Cys770-Cys780, Cys774-Cys785, Cys787-Cys796, Cys810-Cys820, Cys814-Cys829, and Cys831-Cys840. Asn925, Asn948, and Asn1267 each carry an N-linked (GlcNAc...) asparagine glycan. NHL repeat units follow at residues 1272–1316 (LELR…VKSL), 1342–1386 (ARCG…NGII), 1401–1452 (LSCD…IAGR), 1474–1501 (LESA…INRL), and 1530–1573 (CYSG…VSKN). A YD 1 repeat occupies 1583 to 1602 (YEAASPGEQELYVFNADGIH). Asn1616 carries an N-linked (GlcNAc...) asparagine glycan. YD repeat units lie at residues 1619-1639 (YSTD…LKIR), 1682-1701 (YDGN…WTTF), and 1702-1724 (YDYD…TSLH). 5 N-linked (GlcNAc...) asparagine glycosylation sites follow: Asn1712, Asn1749, Asn1773, Asn1807, and Asn1892. YD repeat units lie at residues 1895-1914 (YFFN…ERTD), 1936-1954 (YLDK…YIFE), 1955-1975 (YDSS…HSMS), 1982-1999 (YIRN…VIFD), 2000-2021 (YSDD…VFYK), 2022-2039 (YGKL…TAVT), 2042-2062 (YDET…FSCT), 2065-2085 (YRKI…EGMV), 2093-2113 (YHDN…TPLP), 2119-2136 (YDEI…GVIY), 2137-2163 (YDIN…IKEV), 2165-2178 (YEMF…MTVQ), 2179-2202 (YDSM…TKYT), 2205-2225 (YDGD…WRYS), 2226-2246 (YDLN…LMPL), 2248-2268 (YDLR…DDDG), 2280-2300 (YNSK…SVQY), and 2302-2322 (YDGV…LQYF). N-linked (GlcNAc...) asparagine glycosylation occurs at Asn1993. A glycan (N-linked (GlcNAc...) asparagine) is linked at Asn2197. A glycan (N-linked (GlcNAc...) asparagine) is linked at Asn2337. A YD 23 repeat occupies 2348-2389 (YDLQGHLFAMESSSGEEYYVASDNTGTPLAVFSINGLMIKQL). Asn2648 carries an N-linked (GlcNAc...) asparagine glycan.

Belongs to the tenascin family. Teneurin subfamily. As to quaternary structure, homodimer; disulfide-linked. Heterodimer with either TENM1 or TENM3. May also form heterodimer with TENM4. Isoform 2 (C-terminal globular domain) interacts with ADGRL1 isoform 2. Derives from the membrane form by proteolytic processing. Post-translationally, derives from the plasma membrane form by proteolytic cleavage and translocates to the nucleus. Homophilic binding of the C-terminal extracellular domain stimulates its proteolytic cleavage and release in the cytoplasmic. Is subjected to rapid degradation by the proteasome pathway. In terms of tissue distribution, highly expressed in heart, followed by brain, liver, kidney and fetal brain and weakly expressed in lung and testis. No expression was detected in skeletal muscle, pancreas, spleen, ovary and fetal liver.

It localises to the cell membrane. The protein resides in the presynaptic cell membrane. The protein localises to the postsynaptic cell membrane. It is found in the endoplasmic reticulum. Its subcellular location is the golgi apparatus. It localises to the synapse. The protein resides in the cell projection. The protein localises to the dendritic spine. It is found in the filopodium. Its subcellular location is the growth cone. It localises to the nucleus. The protein resides in the PML body. Involved in neural development, regulating the establishment of proper connectivity within the nervous system. Acts as a ligand of the ADGRL1 and ADGRL3 receptors that are expressed at the surface of adjacent cells. Promotes the formation of filopodia and enlarged growth cone in neuronal cells. Mediates axon guidance and homophilic and heterophilic cell-cell adhesion. May function as a cellular signal transducer. Functionally, acts as a ligand of the ADGRL1 receptor. Mediates axon guidance and heterophilic cell-cell adhesion. Its function is as follows. Induces gene transcription inhibition. The polypeptide is Teneurin-2 (TENM2) (Homo sapiens (Human)).